Reading from the N-terminus, the 43-residue chain is Protein PsbN (43 aa).

The helical transmembrane segment at 7–29 (LSIALAAVCIGVTGYSIYLSFGP) threads the bilayer.

The protein belongs to the PsbN family.

The protein localises to the cellular thylakoid membrane. May play a role in photosystem I and II biogenesis. The polypeptide is Protein PsbN (Thermosynechococcus vestitus (strain NIES-2133 / IAM M-273 / BP-1)).